Reading from the N-terminus, the 183-residue chain is Shikimate kinase (183 aa).

An ATP-binding site is contributed by 14–19 (GAGKTT). Thr-18 serves as a coordination point for Mg(2+). Positions 36, 60, and 82 each coordinate substrate. Arg-120 serves as a coordination point for ATP. Substrate is bound at residue Arg-139. Gln-156 is a binding site for ATP.

It belongs to the shikimate kinase family. Monomer. Mg(2+) is required as a cofactor.

Its subcellular location is the cytoplasm. It carries out the reaction shikimate + ATP = 3-phosphoshikimate + ADP + H(+). It participates in metabolic intermediate biosynthesis; chorismate biosynthesis; chorismate from D-erythrose 4-phosphate and phosphoenolpyruvate: step 5/7. Its function is as follows. Catalyzes the specific phosphorylation of the 3-hydroxyl group of shikimic acid using ATP as a cosubstrate. The chain is Shikimate kinase from Thiobacillus denitrificans (strain ATCC 25259 / T1).